Consider the following 609-residue polypeptide: Glutamine--fructose-6-phosphate aminotransferase [isomerizing] (609 aa).

Cys2 functions as the Nucleophile; for GATase activity in the catalytic mechanism. Positions Cys2–Arg218 constitute a Glutamine amidotransferase type-2 domain. SIS domains lie at Ala286–Leu426 and Leu458–Pro599. Lys604 serves as the catalytic For Fru-6P isomerization activity.

In terms of assembly, homodimer. In pull-down experiments interacts with CedA.

It is found in the cytoplasm. It carries out the reaction D-fructose 6-phosphate + L-glutamine = D-glucosamine 6-phosphate + L-glutamate. Catalyzes the first step in hexosamine metabolism, converting fructose-6P into glucosamine-6P using glutamine as a nitrogen source. This Escherichia coli (strain K12) protein is Glutamine--fructose-6-phosphate aminotransferase [isomerizing] (glmS).